A 390-amino-acid polypeptide reads, in one-letter code: Methylthioribose-1-phosphate isomerase (390 aa).

Substrate-binding positions include 53–55 (RGA), R90, and Q207. Residue D248 is the Proton donor of the active site. Residue 258–259 (NK) coordinates substrate.

This sequence belongs to the EIF-2B alpha/beta/delta subunits family. MtnA subfamily.

It carries out the reaction 5-(methylsulfanyl)-alpha-D-ribose 1-phosphate = 5-(methylsulfanyl)-D-ribulose 1-phosphate. It catalyses the reaction 5-deoxy-alpha-D-ribose 1-phosphate = 5-deoxy-D-ribulose 1-phosphate. It participates in amino-acid biosynthesis; L-methionine biosynthesis via salvage pathway; L-methionine from S-methyl-5-thio-alpha-D-ribose 1-phosphate: step 1/6. Functionally, catalyzes the interconversion of methylthioribose-1-phosphate (MTR-1-P) into methylthioribulose-1-phosphate (MTRu-1-P). Also catalyzes the interconversion of 5-deoxyribose 1-phosphate and 5-deoxyribulose 1-phosphate. Part of a bifunctional DHAP-shunt salvage pathway for SAM by-products. In Rhodospirillum rubrum (strain ATCC 11170 / ATH 1.1.1 / DSM 467 / LMG 4362 / NCIMB 8255 / S1), this protein is Methylthioribose-1-phosphate isomerase.